The chain runs to 613 residues: Threonine--tRNA ligase (613 aa).

Residues 1–147 are editing domain; it reads MRLLLIHARS…TITPQESAPQ (147 aa). 2 catalytic regions span residues 199 to 495 and 200 to 495; these read PRYI…PALP and RYID…PALP. Residues Cys292, His343, and His464 each coordinate Zn(2+).

This sequence belongs to the class-II aminoacyl-tRNA synthetase family. Homodimer. Zn(2+) serves as cofactor.

Its subcellular location is the cytoplasm. It carries out the reaction tRNA(Thr) + L-threonine + ATP = L-threonyl-tRNA(Thr) + AMP + diphosphate + H(+). In terms of biological role, catalyzes the attachment of threonine to tRNA(Thr) in a two-step reaction: L-threonine is first activated by ATP to form Thr-AMP and then transferred to the acceptor end of tRNA(Thr). Also edits incorrectly charged L-seryl-tRNA(Thr). This is Threonine--tRNA ligase from Caldivirga maquilingensis (strain ATCC 700844 / DSM 13496 / JCM 10307 / IC-167).